A 343-amino-acid polypeptide reads, in one-letter code: tRNA N6-adenosine threonylcarbamoyltransferase (343 aa).

Histidine 116 and histidine 120 together coordinate Fe cation. Substrate-binding positions include leucine 138–glycine 142, aspartate 171, glycine 184, aspartate 188, and asparagine 277. Aspartate 306 provides a ligand contact to Fe cation.

It belongs to the KAE1 / TsaD family. It depends on Fe(2+) as a cofactor.

It is found in the cytoplasm. The catalysed reaction is L-threonylcarbamoyladenylate + adenosine(37) in tRNA = N(6)-L-threonylcarbamoyladenosine(37) in tRNA + AMP + H(+). In terms of biological role, required for the formation of a threonylcarbamoyl group on adenosine at position 37 (t(6)A37) in tRNAs that read codons beginning with adenine. Is involved in the transfer of the threonylcarbamoyl moiety of threonylcarbamoyl-AMP (TC-AMP) to the N6 group of A37, together with TsaE and TsaB. TsaD likely plays a direct catalytic role in this reaction. This chain is tRNA N6-adenosine threonylcarbamoyltransferase, found in Ligilactobacillus salivarius (strain UCC118) (Lactobacillus salivarius).